Consider the following 492-residue polypeptide: Gamma-aminobutyric acid receptor subunit alpha-3 (492 aa).

The first 28 residues, 1–28, serve as a signal peptide directing secretion; the sequence is MIITQMSQFYMAGLGLLFLINILPGTTG. The Extracellular portion of the chain corresponds to 29–274; that stretch reads QVESRRQEPG…MTTHFHLKRK (246 aa). N-linked (GlcNAc...) asparagine glycosylation is present at Asn-63. Position 119 (Arg-119) interacts with 4-aminobutanoate. N-linked (GlcNAc...) asparagine glycosylation is found at Asn-163 and Asn-176. Position 182 (Thr-182) interacts with 4-aminobutanoate. Cysteines 191 and 205 form a disulfide. An N-linked (GlcNAc...) asparagine glycan is attached at Asn-228. Residues 275 to 295 form a helical membrane-spanning segment; sequence IGYFVIQTYLPCIMTVILSQV. The Cytoplasmic portion of the chain corresponds to 296 to 305; sequence SFWLNRESVP. A helical transmembrane segment spans residues 306 to 325; the sequence is ARTVFGVTTVLTMTTLSISA. Residues 326-336 lie on the Extracellular side of the membrane; that stretch reads RNSLPKVAYAT. Residues 337–357 traverse the membrane as a helical segment; that stretch reads AMDWFMAVCYAFVFSALIEFA. Residues 358–457 lie on the Cytoplasmic side of the membrane; it reads TVNYFTKRSW…TYNSVSKVDK (100 aa). The residue at position 426 (Ser-426) is a Phosphoserine. The residue at position 427 (Thr-427) is a Phosphothreonine. Ser-433 is subject to Phosphoserine. Residues 458–478 form a helical membrane-spanning segment; the sequence is ISRIIFPVLFAIFNLVYWATY. Over 479 to 492 the chain is Extracellular; that stretch reads VNRESAIKGMIRKQ.

This sequence belongs to the ligand-gated ion channel (TC 1.A.9) family. Gamma-aminobutyric acid receptor (TC 1.A.9.5) subfamily. GABRA3 sub-subfamily. In terms of assembly, heteropentamer, formed by a combination of alpha (GABRA1-6), beta (GABRB1-3), gamma (GABRG1-3), delta (GABRD), epsilon (GABRE), rho (GABRR1-3), pi (GABRP) and theta (GABRQ) chains, each subunit exhibiting distinct physiological and pharmacological properties. Binds UBQLN1. Interacts with GPHN.

Its subcellular location is the postsynaptic cell membrane. The protein localises to the cell membrane. The catalysed reaction is chloride(in) = chloride(out). Its function is as follows. Alpha subunit of the heteropentameric ligand-gated chloride channel gated by gamma-aminobutyric acid (GABA), a major inhibitory neurotransmitter in the brain. GABA-gated chloride channels, also named GABA(A) receptors (GABAAR), consist of five subunits arranged around a central pore and contain GABA active binding site(s) located at the alpha and beta subunit interface(s). When activated by GABA, GABAARs selectively allow the flow of chloride anions across the cell membrane down their electrochemical gradient. Chloride influx into the postsynaptic neuron following GABAAR opening decreases the neuron ability to generate a new action potential, thereby reducing nerve transmission. The protein is Gamma-aminobutyric acid receptor subunit alpha-3 (GABRA3) of Bos taurus (Bovine).